Reading from the N-terminus, the 383-residue chain is Glutaminyl-peptide cyclotransferase-like protein (383 aa).

The tract at residues 1 to 25 is disordered; sequence MPSGGRGRPRLQVGERSLLERPSPP. A helical transmembrane segment spans residues 35–57; that stretch reads LLPQLLLALTVASVFYTIWRIWH. A disulfide bond links Cys-168 and Cys-192. Asp-187 lines the Zn(2+) pocket. Glu-226 functions as the Proton acceptor in the catalytic mechanism. Glu-227 lines the Zn(2+) pocket. The active-site Proton acceptor is the Asp-270. Zn(2+) is bound at residue His-352.

It belongs to the glutaminyl-peptide cyclotransferase family.

The protein localises to the golgi apparatus membrane. It carries out the reaction N-terminal L-glutaminyl-[peptide] = N-terminal 5-oxo-L-prolyl-[peptide] + NH4(+). Functionally, responsible for the biosynthesis of pyroglutamyl peptides. This chain is Glutaminyl-peptide cyclotransferase-like protein (QPCTL), found in Bos taurus (Bovine).